The chain runs to 1035 residues: Sulfite reductase [NADPH] flavoprotein component (1035 aa).

Residues 648-879 form the FAD-binding FR-type domain; that stretch reads VKNFVVKVKE…VKPSVMKLPP (232 aa). FAD is bound by residues 684-695 and 814-824; these read YDIGEALGIHAR and LKRREYSIASS.

FAD is required as a cofactor. Requires FMN as cofactor.

The catalysed reaction is hydrogen sulfide + 3 NADP(+) + 3 H2O = sulfite + 3 NADPH + 4 H(+). Its pathway is sulfur metabolism; hydrogen sulfide biosynthesis; hydrogen sulfide from sulfite (NADPH route): step 1/1. Its function is as follows. This enzyme catalyzes the 6-electron reduction of sulfite to sulfide. This is one of several activities required for the biosynthesis of L-cysteine from sulfate. This is Sulfite reductase [NADPH] flavoprotein component (MET10) from Saccharomyces cerevisiae (strain ATCC 204508 / S288c) (Baker's yeast).